Consider the following 89-residue polypeptide: Class I hydrophobin C (89 aa).

The first 16 residues, Met-1–Ala-16, serve as a signal peptide directing secretion. 4 disulfides stabilise this stretch: Cys-28–Cys-68, Cys-39–Cys-60, Cys-40–Cys-52, and Cys-69–Cys-85. The N-linked (GlcNAc...) asparagine glycan is linked to Asn-36.

The protein belongs to the fungal hydrophobin family.

The protein resides in the secreted. It localises to the cell wall. Its subcellular location is the vacuole. It is found in the cytoplasmic vesicle. Its function is as follows. Aerial growth, conidiation, and dispersal of filamentous fungi in the environment rely upon a capability of their secreting small amphipathic proteins called hydrophobins (HPBs) with low sequence identity. Class I can self-assemble into an outermost layer of rodlet bundles on aerial cell surfaces, conferring cellular hydrophobicity that supports fungal growth, development and dispersal; whereas Class II form highly ordered films at water-air interfaces through intermolecular interactions but contribute nothing to the rodlet structure. Hyd1C contributes to certain cell wall-related features, such as hydrophobicity but is not involved in cell wall-related events during fungal proliferation in host hemocoel. Does not contribute to conidial hydrophobicity. In Beauveria bassiana (strain ARSEF 2860) (White muscardine disease fungus), this protein is Class I hydrophobin C.